The chain runs to 430 residues: Glutamyl-tRNA reductase (430 aa).

Substrate-binding positions include 49–52, serine 109, 114–116, and glutamine 120; these read TCNR and EGQ. Cysteine 50 (nucleophile) is an active-site residue. 189–194 lines the NADP(+) pocket; that stretch reads GAGKMA.

Belongs to the glutamyl-tRNA reductase family. In terms of assembly, homodimer.

The enzyme catalyses (S)-4-amino-5-oxopentanoate + tRNA(Glu) + NADP(+) = L-glutamyl-tRNA(Glu) + NADPH + H(+). The protein operates within porphyrin-containing compound metabolism; protoporphyrin-IX biosynthesis; 5-aminolevulinate from L-glutamyl-tRNA(Glu): step 1/2. It participates in porphyrin-containing compound metabolism; chlorophyll biosynthesis. Catalyzes the NADPH-dependent reduction of glutamyl-tRNA(Glu) to glutamate 1-semialdehyde (GSA). The sequence is that of Glutamyl-tRNA reductase from Crocosphaera subtropica (strain ATCC 51142 / BH68) (Cyanothece sp. (strain ATCC 51142)).